Here is a 150-residue protein sequence, read N- to C-terminus: Glycine cleavage system H-like protein gcvH2 (150 aa).

Residues 44 to 126 (VATVGLSSFG…PANNWMVKFK (83 aa)) form the Lipoyl-binding domain.

The protein belongs to the GcvH family.

The polypeptide is Glycine cleavage system H-like protein gcvH2 (gcvH2) (Dictyostelium discoideum (Social amoeba)).